We begin with the raw amino-acid sequence, 257 residues long: UPF0758 protein Bcenmc03_2526 (257 aa).

Residues 1–53 (MLSPCPILPSAECRDTADTPADPPGRVIPINRRRRRPGDWRPERPRERLLERG) are disordered. A compositionally biased stretch (basic and acidic residues) spans 37–51 (PGDWRPERPRERLLE). Residues 135–257 (QIDSPGAVED…TFSFARAGWL (123 aa)) form the MPN domain. Residues H206, H208, and D219 each contribute to the Zn(2+) site. Positions 206-219 (HNHPSGAVQPSAED) match the JAMM motif motif.

Belongs to the UPF0758 family.

The polypeptide is UPF0758 protein Bcenmc03_2526 (Burkholderia orbicola (strain MC0-3)).